The following is a 77-amino-acid chain: Sec-independent protein translocase protein TatA (77 aa).

Residues 1 to 21 (MGSFSIWHWLIVLVIVMLVFG) traverse the membrane as a helical segment. The interval 46-77 (GEGKAAADPAQSKELRDSTTIDVEAKEKTRQQ) is disordered.

Belongs to the TatA/E family. As to quaternary structure, the Tat system comprises two distinct complexes: a TatABC complex, containing multiple copies of TatA, TatB and TatC subunits, and a separate TatA complex, containing only TatA subunits. Substrates initially bind to the TatABC complex, which probably triggers association of the separate TatA complex to form the active translocon.

It localises to the cell inner membrane. Functionally, part of the twin-arginine translocation (Tat) system that transports large folded proteins containing a characteristic twin-arginine motif in their signal peptide across membranes. TatA could form the protein-conducting channel of the Tat system. The sequence is that of Sec-independent protein translocase protein TatA from Cupriavidus necator (strain ATCC 17699 / DSM 428 / KCTC 22496 / NCIMB 10442 / H16 / Stanier 337) (Ralstonia eutropha).